A 410-amino-acid polypeptide reads, in one-letter code: Serine proteinase inhibitor A3K (410 aa).

The signal sequence occupies residues 1-24; it reads MPSAISRGLLLLAGLCYLVFGIMA. 5 N-linked (GlcNAc...) asparagine glycosylation sites follow: asparagine 62, asparagine 99, asparagine 162, asparagine 229, and asparagine 263. An RCL region spans residues 360–381; sequence GTEAAAATVLEATRTARPPRLS.

This sequence belongs to the serpin family.

The protein resides in the secreted. Its subcellular location is the extracellular space. In terms of biological role, contrapsin inhibits trypsin-like proteases. This is Serine proteinase inhibitor A3K (SERPINA3K) from Cavia porcellus (Guinea pig).